Reading from the N-terminus, the 102-residue chain is Small ribosomal subunit protein uS10 (102 aa).

Belongs to the universal ribosomal protein uS10 family. Part of the 30S ribosomal subunit.

Functionally, involved in the binding of tRNA to the ribosomes. This chain is Small ribosomal subunit protein uS10, found in Thermococcus gammatolerans (strain DSM 15229 / JCM 11827 / EJ3).